Consider the following 457-residue polypeptide: Glutamate--tRNA ligase 1 (457 aa).

Residues 9-19 carry the 'HIGH' region motif; sequence PSPTGYIHIGN. The short motif at 250-254 is the 'KMSKS' region element; that stretch reads GLSKR. Lysine 253 contributes to the ATP binding site.

Belongs to the class-I aminoacyl-tRNA synthetase family. Glutamate--tRNA ligase type 1 subfamily. As to quaternary structure, monomer.

The protein resides in the cytoplasm. It carries out the reaction tRNA(Glu) + L-glutamate + ATP = L-glutamyl-tRNA(Glu) + AMP + diphosphate. Functionally, catalyzes the attachment of glutamate to tRNA(Glu) in a two-step reaction: glutamate is first activated by ATP to form Glu-AMP and then transferred to the acceptor end of tRNA(Glu). The sequence is that of Glutamate--tRNA ligase 1 from Brucella canis (strain ATCC 23365 / NCTC 10854 / RM-666).